Reading from the N-terminus, the 324-residue chain is Muscleblind-like protein (324 aa).

2 C3H1-type zinc fingers span residues 38-66 (WLQV…HPPP) and 72-100 (QGRV…HPPQ).

The protein belongs to the muscleblind family. In terms of tissue distribution, expressed in neurons around the pharynx.

Its subcellular location is the nucleus. Binds to RNA with repeat sequences 5'-CUG-3' and 5'-CCUG-3'. The polypeptide is Muscleblind-like protein (mbl-1) (Caenorhabditis elegans).